The following is a 306-amino-acid chain: Dihydroorotate dehydrogenase B (NAD(+)), catalytic subunit (306 aa).

FMN is bound by residues S22 and 46 to 47; that span reads KT. Substrate contacts are provided by residues K46, 70–74, and N128; that span reads NSIGL. Position 128 (N128) interacts with FMN. The active-site Nucleophile is the C131. An FMN-binding site is contributed by K164. Position 191–192 (191–192) interacts with substrate; the sequence is NT. FMN-binding positions include G216, 242–243, and 264–265; these read GG and GS.

This sequence belongs to the dihydroorotate dehydrogenase family. Type 1 subfamily. Heterotetramer of 2 PyrK and 2 PyrD type B subunits. Requires FMN as cofactor.

It localises to the cytoplasm. It carries out the reaction (S)-dihydroorotate + NAD(+) = orotate + NADH + H(+). Its pathway is pyrimidine metabolism; UMP biosynthesis via de novo pathway; orotate from (S)-dihydroorotate (NAD(+) route): step 1/1. Catalyzes the conversion of dihydroorotate to orotate with NAD(+) as electron acceptor. This is Dihydroorotate dehydrogenase B (NAD(+)), catalytic subunit (pyrD) from Endomicrobium trichonymphae.